Here is a 474-residue protein sequence, read N- to C-terminus: Pyruvate kinase (474 aa).

Residue Arg-32 participates in substrate binding. Residues Asn-34, Ser-36, and Asp-66 each coordinate K(+). 34–37 provides a ligand contact to ATP; that stretch reads NFSH. Arg-73 and Lys-155 together coordinate ATP. Glu-221 lines the Mg(2+) pocket. Substrate-binding residues include Gly-244, Asp-245, and Thr-277. Asp-245 is a Mg(2+) binding site.

Belongs to the pyruvate kinase family. As to quaternary structure, homotetramer. It depends on Mg(2+) as a cofactor. The cofactor is K(+).

It catalyses the reaction pyruvate + ATP = phosphoenolpyruvate + ADP + H(+). The protein operates within carbohydrate degradation; glycolysis; pyruvate from D-glyceraldehyde 3-phosphate: step 5/5. This chain is Pyruvate kinase (pykF), found in Clostridium perfringens (strain 13 / Type A).